Here is a 424-residue protein sequence, read N- to C-terminus: Enolase (424 aa).

Glutamine 163 provides a ligand contact to (2R)-2-phosphoglycerate. Glutamate 204 acts as the Proton donor in catalysis. Mg(2+) is bound by residues aspartate 241, glutamate 284, and aspartate 311. (2R)-2-phosphoglycerate is bound by residues lysine 336, arginine 365, serine 366, and lysine 387. Lysine 336 serves as the catalytic Proton acceptor.

This sequence belongs to the enolase family. The cofactor is Mg(2+).

It localises to the cytoplasm. The protein resides in the secreted. The protein localises to the cell surface. The enzyme catalyses (2R)-2-phosphoglycerate = phosphoenolpyruvate + H2O. Its pathway is carbohydrate degradation; glycolysis; pyruvate from D-glyceraldehyde 3-phosphate: step 4/5. In terms of biological role, catalyzes the reversible conversion of 2-phosphoglycerate (2-PG) into phosphoenolpyruvate (PEP). It is essential for the degradation of carbohydrates via glycolysis. In Dictyoglomus turgidum (strain DSM 6724 / Z-1310), this protein is Enolase.